We begin with the raw amino-acid sequence, 225 residues long: 3-dehydroquinate dehydratase (225 aa).

3-dehydroquinate-binding positions include Ser6, 30 to 32 (EWR), and Arg62. His118 (proton donor/acceptor) is an active-site residue. The active-site Schiff-base intermediate with substrate is the Lys143. Residues Arg186, Thr205, and Gln209 each coordinate 3-dehydroquinate.

It belongs to the type-I 3-dehydroquinase family. Homodimer.

It carries out the reaction 3-dehydroquinate = 3-dehydroshikimate + H2O. It functions in the pathway metabolic intermediate biosynthesis; chorismate biosynthesis; chorismate from D-erythrose 4-phosphate and phosphoenolpyruvate: step 3/7. In terms of biological role, involved in the third step of the chorismate pathway, which leads to the biosynthesis of aromatic amino acids. Catalyzes the cis-dehydration of 3-dehydroquinate (DHQ) and introduces the first double bond of the aromatic ring to yield 3-dehydroshikimate. In Streptococcus gordonii (strain Challis / ATCC 35105 / BCRC 15272 / CH1 / DL1 / V288), this protein is 3-dehydroquinate dehydratase.